The primary structure comprises 95 residues: Aspartyl/glutamyl-tRNA(Asn/Gln) amidotransferase subunit C (95 aa).

This sequence belongs to the GatC family. In terms of assembly, heterotrimer of A, B and C subunits.

It carries out the reaction L-glutamyl-tRNA(Gln) + L-glutamine + ATP + H2O = L-glutaminyl-tRNA(Gln) + L-glutamate + ADP + phosphate + H(+). It catalyses the reaction L-aspartyl-tRNA(Asn) + L-glutamine + ATP + H2O = L-asparaginyl-tRNA(Asn) + L-glutamate + ADP + phosphate + 2 H(+). Functionally, allows the formation of correctly charged Asn-tRNA(Asn) or Gln-tRNA(Gln) through the transamidation of misacylated Asp-tRNA(Asn) or Glu-tRNA(Gln) in organisms which lack either or both of asparaginyl-tRNA or glutaminyl-tRNA synthetases. The reaction takes place in the presence of glutamine and ATP through an activated phospho-Asp-tRNA(Asn) or phospho-Glu-tRNA(Gln). This chain is Aspartyl/glutamyl-tRNA(Asn/Gln) amidotransferase subunit C, found in Ruthia magnifica subsp. Calyptogena magnifica.